A 209-amino-acid chain; its full sequence is MIVPIFFLFSLLFSSSHGAIQDFCVADYSAPQGPAGYSCKNPAKVTVDNFVYSGLGITGNTTNLIKAAVTTAFDNQFPGVNGLGISLARPDLAPGGVIPFHTHPGASEIIIVIEGSLCAAFVSSDNKVYLKSLKKGDTMIFPSGLLHFQLNAGKNNALFFVAFNSPNPGLQLVDYALFGNDLATELVAAASFLDPAEIKRLKAVLGGSG.

The signal sequence occupies residues Met1–Gly18. Cys24 and Cys39 form a disulfide bridge. The Cupin type-1 domain occupies Ser53 to Lys199. Residue Asn60 is glycosylated (N-linked (GlcNAc...) asparagine). His101, His103, Glu108, and His147 together coordinate Mn(2+).

It localises to the secreted. The protein localises to the extracellular space. Its subcellular location is the apoplast. In terms of biological role, has antibacterial activity against B.subtilis (MIC=5 ug), B.cereus (MIC=50 ug), A.hydrophila (MIC=2.5 ug), S.marcescens(MIC=10 ug), S.enterica (MIC=10 ug), P.entomophila (MIC=2.5 ug) and P.rhodesiae (MIC=10 ug). Has antifungal activity against F.solani KACC 40384 and F.oxysporum KACC 40032. Probably has no oxalate oxidase activity even if the active site is conserved. The polypeptide is Germin-like protein (Morus alba (White mulberry)).